The following is a 218-amino-acid chain: MSAPLTLALSKGRIFEETVPLLAAAGVTVAEDPETSRKLILPTTDPNLRVIVVRATDVPTYVEYGAADFGVAGKDVLLEHGGGGLYQPIDLNIARCRMSVAVPAGFDYANAVRQGARLRVATKYVETAREHFAAKGVHVDLIKLYGSMELAPLVGLADAIVDLVSSGGTLKANNLVEVEEIMPISSRLVVNQAALKLKRAALKPFLDAFERASLGSGA.

This sequence belongs to the ATP phosphoribosyltransferase family. Short subfamily. Heteromultimer composed of HisG and HisZ subunits.

It localises to the cytoplasm. It carries out the reaction 1-(5-phospho-beta-D-ribosyl)-ATP + diphosphate = 5-phospho-alpha-D-ribose 1-diphosphate + ATP. It functions in the pathway amino-acid biosynthesis; L-histidine biosynthesis; L-histidine from 5-phospho-alpha-D-ribose 1-diphosphate: step 1/9. Functionally, catalyzes the condensation of ATP and 5-phosphoribose 1-diphosphate to form N'-(5'-phosphoribosyl)-ATP (PR-ATP). Has a crucial role in the pathway because the rate of histidine biosynthesis seems to be controlled primarily by regulation of HisG enzymatic activity. This Burkholderia mallei (strain ATCC 23344) protein is ATP phosphoribosyltransferase.